The following is a 203-amino-acid chain: Small ribosomal subunit protein uS4 (203 aa).

One can recognise an S4 RNA-binding domain in the interval 93 to 154; the sequence is RRLDNVVYRC…KSRNLDAVAD (62 aa).

This sequence belongs to the universal ribosomal protein uS4 family. As to quaternary structure, part of the 30S ribosomal subunit. Contacts protein S5. The interaction surface between S4 and S5 is involved in control of translational fidelity.

In terms of biological role, one of the primary rRNA binding proteins, it binds directly to 16S rRNA where it nucleates assembly of the body of the 30S subunit. Its function is as follows. With S5 and S12 plays an important role in translational accuracy. The chain is Small ribosomal subunit protein uS4 from Chlorobaculum tepidum (strain ATCC 49652 / DSM 12025 / NBRC 103806 / TLS) (Chlorobium tepidum).